We begin with the raw amino-acid sequence, 284 residues long: 4-hydroxybenzoate octaprenyltransferase (284 aa).

A run of 9 helical transmembrane segments spans residues 19 to 39 (IGTL…AKGM), 42 to 62 (FDVL…GCVI), 93 to 113 (IVLF…MNPL), 114 to 134 (TIKL…MKRF), 136 to 156 (HLPQ…AWAA), 161 to 181 (LPSI…AYDT), 209 to 229 (LMVG…GMHY), 235 to 252 (FYWA…QQHL), and 264 to 284 (AFLN…ITFW).

The protein belongs to the UbiA prenyltransferase family. It depends on Mg(2+) as a cofactor.

The protein resides in the cell inner membrane. It carries out the reaction all-trans-octaprenyl diphosphate + 4-hydroxybenzoate = 4-hydroxy-3-(all-trans-octaprenyl)benzoate + diphosphate. It functions in the pathway cofactor biosynthesis; ubiquinone biosynthesis. Catalyzes the prenylation of para-hydroxybenzoate (PHB) with an all-trans polyprenyl group. Mediates the second step in the final reaction sequence of ubiquinone-8 (UQ-8) biosynthesis, which is the condensation of the polyisoprenoid side chain with PHB, generating the first membrane-bound Q intermediate 3-octaprenyl-4-hydroxybenzoate. In Vibrio atlanticus (strain LGP32) (Vibrio splendidus (strain Mel32)), this protein is 4-hydroxybenzoate octaprenyltransferase.